Consider the following 353-residue polypeptide: DNA polymerase IV (353 aa).

The UmuC domain occupies Ile-14–Gly-198. Residues Asp-18 and Asp-116 each contribute to the Mg(2+) site. Glu-117 is a catalytic residue.

The protein belongs to the DNA polymerase type-Y family. As to quaternary structure, monomer. Mg(2+) serves as cofactor.

It is found in the cytoplasm. The catalysed reaction is DNA(n) + a 2'-deoxyribonucleoside 5'-triphosphate = DNA(n+1) + diphosphate. Functionally, poorly processive, error-prone DNA polymerase involved in untargeted mutagenesis. Copies undamaged DNA at stalled replication forks, which arise in vivo from mismatched or misaligned primer ends. These misaligned primers can be extended by PolIV. Exhibits no 3'-5' exonuclease (proofreading) activity. May be involved in translesional synthesis, in conjunction with the beta clamp from PolIII. This Streptococcus pneumoniae serotype 4 (strain ATCC BAA-334 / TIGR4) protein is DNA polymerase IV.